The sequence spans 205 residues: Ribosomal RNA large subunit methyltransferase E (205 aa).

S-adenosyl-L-methionine is bound by residues Gly50, Trp52, Asp67, Asn83, and Asp111. Residue Lys151 is the Proton acceptor of the active site.

Belongs to the class I-like SAM-binding methyltransferase superfamily. RNA methyltransferase RlmE family.

The protein localises to the cytoplasm. It catalyses the reaction uridine(2552) in 23S rRNA + S-adenosyl-L-methionine = 2'-O-methyluridine(2552) in 23S rRNA + S-adenosyl-L-homocysteine + H(+). Its function is as follows. Specifically methylates the uridine in position 2552 of 23S rRNA at the 2'-O position of the ribose in the fully assembled 50S ribosomal subunit. In Thermoplasma acidophilum (strain ATCC 25905 / DSM 1728 / JCM 9062 / NBRC 15155 / AMRC-C165), this protein is Ribosomal RNA large subunit methyltransferase E.